The primary structure comprises 526 residues: MSNSLEFPWLSALVLLPLLAAFGIPLLPQSRWARWYALAVGALDLGLMAYIFGWHYDLRDFSLQLAERYAWVPQIGFHWSLAVDGLSFPLVLLSGLITTLAIVAAWNLTHKPRLFFFLLLLMYGAQVGVFLAQDLLLFFLMWEIELVPVYLLIAIWGGPQRQYAATKFILYTAAASIFILVGSLAMAFGSEGFSLEMAELGAKSYPLALQILAYAAFLIAFGVKLPVFPLHTWLPDAHSEASAPISMILAGVLLKMGGYGLIRLNVGILSEAHVYFAPVLAVLGAVNIVYGALAALGQNYLKRRLAYSSIAHMGFVLIGIAAFTELGLNGALLQMISHGLIAAVLFFLTGITYERTHTLALDKLGGLAKQMPKAFALFTAGSLASLALPGMSGFVGELTVFLGLITSDAYAPTFKAGIALLAAVGIILTPIYLLSMLRQVFYGAQDPGLVLEDYLGDLRPREMAVALCLLLPILGIGLYPRLATQTYDVTTVAVAAQLRSALPTEIVQRPLLPVQPAQVAALPPTD.

Helical transmembrane passes span 7-27, 35-55, 86-106, 114-134, 135-155, 168-188, 208-228, 242-262, 276-296, 310-330, 331-351, 374-396, 417-437, and 463-483; these read FPWLSALVLLPLLAAFGIPLL, WYALAVGALDLGLMAYIFGWH, LSFPLVLLSGLITTLAIVAAW, LFFFLLLLMYGAQVGVFLAQD, LLLFFLMWEIELVPVYLLIAI, FILYTAAASIFILVGSLAMAF, ALQILAYAAFLIAFGVKLPVF, SAPISMILAGVLLKMGGYGLI, FAPVLAVLGAVNIVYGALAAL, IAHMGFVLIGIAAFTELGLNG, ALLQMISHGLIAAVLFFLTGI, AFALFTAGSLASLALPGMSGFVG, GIALLAAVGIILTPIYLLSML, and MAVALCLLLPILGIGLYPRLA.

It belongs to the complex I subunit 4 family.

It localises to the cellular thylakoid membrane. The enzyme catalyses a plastoquinone + NADH + (n+1) H(+)(in) = a plastoquinol + NAD(+) + n H(+)(out). It catalyses the reaction a plastoquinone + NADPH + (n+1) H(+)(in) = a plastoquinol + NADP(+) + n H(+)(out). Its function is as follows. NDH-1 shuttles electrons from NAD(P)H, via FMN and iron-sulfur (Fe-S) centers, to quinones in the respiratory chain. The immediate electron acceptor for the enzyme in this species is believed to be plastoquinone. Couples the redox reaction to proton translocation (for every two electrons transferred, four hydrogen ions are translocated across the cytoplasmic membrane), and thus conserves the redox energy in a proton gradient. In Synechococcus sp. (strain JA-3-3Ab) (Cyanobacteria bacterium Yellowstone A-Prime), this protein is NAD(P)H-quinone oxidoreductase chain 4 1.